A 168-amino-acid chain; its full sequence is uncharacterized protein (168 aa).

2 helical membrane-spanning segments follow: residues 27 to 47 (NWLVILVFYFLAFGSIMRISG) and 147 to 167 (IENGILLCQVLQALIIVQVMF).

It localises to the membrane. This is an uncharacterized protein from Saccharomyces cerevisiae (strain ATCC 204508 / S288c) (Baker's yeast).